A 252-amino-acid chain; its full sequence is Spermatogenesis-associated protein 9 (252 aa).

The helical transmembrane segment at 145–167 threads the bilayer; that stretch reads TSIMYASYAALIYLAVCVNAVLA. The segment covering 208–221 has biased composition (basic and acidic residues); it reads KAKPYRSLPEKPDN. A disordered region spans residues 208–235; the sequence is KAKPYRSLPEKPDNLLDQPKPPANKQSN.

It localises to the membrane. Functionally, may play at role in testicular development/spermatogenesis and may be an important factor in male infertility. The polypeptide is Spermatogenesis-associated protein 9 (Spata9) (Mus musculus (Mouse)).